We begin with the raw amino-acid sequence, 276 residues long: Merozoite surface protein 2 (276 aa).

The signal sequence occupies residues 1–20; that stretch reads MKVIKTLSIINFFIFVTFNI. 2 N-linked (GlcNAc...) asparagine glycosylation sites follow: asparagine 22 and asparagine 36. The polymorphic region stretch occupies residues 44–202; that stretch reads AESNPSTGAG…EQTESPELQS (159 aa). A disordered region spans residues 44 to 242; that stretch reads AESNPSTGAG…CTDGNKENCG (199 aa). Residues 51–90 are compositionally biased toward gly residues; that stretch reads GAGGSGSAGGSGSAGGSGSAGGSGSAGGSGSAGSGDGNGA. 5 consecutive repeat copies span residues 53 to 58, 59 to 64, 65 to 70, 71 to 76, and 77 to 82. A 5 X 6 AA tandem repeats of G-G-S-G-S-A region spans residues 53–82; the sequence is GGSGSAGGSGSAGGSGSAGGSGSAGGSGSA. Positions 91–127 are enriched in low complexity; it reads NPGADAERSPSTPATTTTTTTTNDAEASTSTSSENPN. Polar residues-rich tracts occupy residues 143 to 169, 176 to 187, and 194 to 204; these read KPNQ…NVPP, KSPTAQPEQAEN, and QTESPELQSAP. An N-linked (GlcNAc...) asparagine glycan is attached at asparagine 153. Residue asparagine 225 is glycosylated (N-linked (GlcNAc...) asparagine). A compositionally biased stretch (basic and acidic residues) spans 229–238; that stretch reads SQKECTDGNK. Cysteine 233 and cysteine 241 are joined by a disulfide. N-linked (GlcNAc...) asparagine glycosylation is present at asparagine 250. Asparagine 250 carries GPI-anchor amidated asparagine lipidation. Residues 251 to 276 constitute a propeptide, removed in mature form; the sequence is SSNIASINKFVVLISATLVLSFAIFI.

The protein resides in the cell membrane. Its function is as follows. May play a role in the merozoite attachment to the erythrocyte. The chain is Merozoite surface protein 2 from Plasmodium falciparum (isolate 7G8).